The primary structure comprises 317 residues: Pantothenate kinase (317 aa).

95–102 (GSVAVGKS) is an ATP binding site.

This sequence belongs to the prokaryotic pantothenate kinase family.

Its subcellular location is the cytoplasm. It catalyses the reaction (R)-pantothenate + ATP = (R)-4'-phosphopantothenate + ADP + H(+). It participates in cofactor biosynthesis; coenzyme A biosynthesis; CoA from (R)-pantothenate: step 1/5. This Myxococcus xanthus (strain DK1622) protein is Pantothenate kinase.